The sequence spans 104 residues: Fluoride-specific ion channel FluC 2 (104 aa).

Helical transmembrane passes span 22–42 (IGPY…LAAV), 48–68 (LVMA…STLA), and 82–102 (MLLG…WCGL). Glycine 59 and serine 62 together coordinate Na(+).

The protein belongs to the fluoride channel Fluc/FEX (TC 1.A.43) family.

Its subcellular location is the cell membrane. It carries out the reaction fluoride(in) = fluoride(out). Its activity is regulated as follows. Na(+) is not transported, but it plays an essential structural role and its presence is essential for fluoride channel function. Functionally, fluoride-specific ion channel. Important for reducing fluoride concentration in the cell, thus reducing its toxicity. The sequence is that of Fluoride-specific ion channel FluC 2 from Corynebacterium diphtheriae (strain ATCC 700971 / NCTC 13129 / Biotype gravis).